The sequence spans 673 residues: Cyclic nucleotide-binding domain-containing protein 2 (673 aa).

Over residues 1 to 15 (MNRSANPEAASSTSH) the composition is skewed to polar residues. A disordered region spans residues 1-89 (MNRSANPEAA…PQPKDRPGVQ (89 aa)). Residues 43 to 86 (PADKSDTTESKSESGSDSRSEEDKESPASIKEIKAETPQPKDRP) show a composition bias toward basic and acidic residues. 206–329 (CYRSYTESLQ…ETQYRYNFFR (124 aa)) is an a nucleoside 3',5'-cyclic phosphate binding site.

As to expression, testis-specific. Exclusively expressed in testicular germ cells while it is not present in mature sperm (at protein level).

The protein localises to the cytoplasm. Its subcellular location is the cytosol. Functionally, essential for male fertility. Plays an important role in spermatogenesis and regulates sperm motility by controlling the development of the flagellar bending of sperm. The sequence is that of Cyclic nucleotide-binding domain-containing protein 2 (Cnbd2) from Mus musculus (Mouse).